The primary structure comprises 359 residues: Membrane-bound lytic murein transglycosylase C (359 aa).

The signal sequence occupies residues 1–16 (MKKYLALALIAPLLIS). Cys17 carries N-palmitoyl cysteine lipidation. The S-diacylglycerol cysteine moiety is linked to residue Cys17.

The protein belongs to the transglycosylase Slt family.

The protein localises to the cell outer membrane. It carries out the reaction Exolytic cleavage of the (1-&gt;4)-beta-glycosidic linkage between N-acetylmuramic acid (MurNAc) and N-acetylglucosamine (GlcNAc) residues in peptidoglycan, from either the reducing or the non-reducing ends of the peptidoglycan chains, with concomitant formation of a 1,6-anhydrobond in the MurNAc residue.. Murein-degrading enzyme. May play a role in recycling of muropeptides during cell elongation and/or cell division. This is Membrane-bound lytic murein transglycosylase C from Escherichia coli O7:K1 (strain IAI39 / ExPEC).